Reading from the N-terminus, the 45-residue chain is Defensin Tk-AMP-D3 (45 aa).

Intrachain disulfides connect Cys3–Cys45, Cys14–Cys34, Cys20–Cys39, and Cys24–Cys41.

Plant defense peptide. The protein is Defensin Tk-AMP-D3 of Triticum kiharae (Wheat).